The sequence spans 228 residues: Rab-like protein 2B (228 aa).

GTP contacts are provided by residues 28–35, 76–80, and 133–136; these read GDSAVGKS, DTAGQ, and NKID. The interval 200–228 is disordered; that stretch reads LEQEEEDVPDQEQSSSIETPSEEAASPHS.

This sequence belongs to the small GTPase superfamily. Rab family. In terms of assembly, interacts (in its GTP-bound form) with CEP19 (via residues 121-150); this interaction is required for its localization to the mother centriole and cilium basal body. Interacts (in its GTP-bound form) with the intraflagellar transport (IFT) complex B (via the IFT74-IFT81 heterodimer). Binding to CEP19 and the IFT74-IFT81 heterodimer is mutually exclusive. In terms of tissue distribution, expressed in the testis.

The protein localises to the cytoplasm. The protein resides in the cytoskeleton. Its subcellular location is the microtubule organizing center. It is found in the centrosome. It localises to the centriole. The protein localises to the cilium basal body. Its function is as follows. Small GTPase required for ciliation. Activated in a guanine nucleotide exchange factor (GEF)-independent manner via its intrinsic GDP for GTP nucleotide exchange ability. Involved in ciliary assembly by binding the intraflagellar transport (IFT) complex B from the large pool pre-docked at the base of the cilium and thus triggers its entry into the cilia. The sequence is that of Rab-like protein 2B (RABL2B) from Homo sapiens (Human).